We begin with the raw amino-acid sequence, 77 residues long: Acyl carrier protein (77 aa).

A Carrier domain is found at 1 to 76 (MSLEDDVKAI…DVIKYIQERQ (76 aa)). Position 36 is an O-(pantetheine 4'-phosphoryl)serine (Ser-36).

The protein belongs to the acyl carrier protein (ACP) family. Post-translationally, 4'-phosphopantetheine is transferred from CoA to a specific serine of apo-ACP by AcpS. This modification is essential for activity because fatty acids are bound in thioester linkage to the sulfhydryl of the prosthetic group.

The protein localises to the cytoplasm. Its pathway is lipid metabolism; fatty acid biosynthesis. Carrier of the growing fatty acid chain in fatty acid biosynthesis. This chain is Acyl carrier protein, found in Chlamydia trachomatis serovar A (strain ATCC VR-571B / DSM 19440 / HAR-13).